A 370-amino-acid chain; its full sequence is NADH-quinone oxidoreductase subunit D (370 aa).

The protein belongs to the complex I 49 kDa subunit family. As to quaternary structure, NDH-1 is composed of 14 different subunits. Subunits NuoB, C, D, E, F, and G constitute the peripheral sector of the complex.

It localises to the cell membrane. The catalysed reaction is a quinone + NADH + 5 H(+)(in) = a quinol + NAD(+) + 4 H(+)(out). Its function is as follows. NDH-1 shuttles electrons from NADH, via FMN and iron-sulfur (Fe-S) centers, to quinones in the respiratory chain. The immediate electron acceptor for the enzyme in this species is believed to be a menaquinone. Couples the redox reaction to proton translocation (for every two electrons transferred, four hydrogen ions are translocated across the cytoplasmic membrane), and thus conserves the redox energy in a proton gradient. In Clostridium beijerinckii (strain ATCC 51743 / NCIMB 8052) (Clostridium acetobutylicum), this protein is NADH-quinone oxidoreductase subunit D.